Here is a 238-residue protein sequence, read N- to C-terminus: Ureidoacrylate amidohydrolase RutB (238 aa).

Asp35 serves as the catalytic Proton acceptor. The active site involves Lys144. Residue Cys177 is the Nucleophile of the active site.

It belongs to the isochorismatase family. RutB subfamily.

It carries out the reaction (Z)-3-ureidoacrylate + H2O + H(+) = (Z)-3-aminoacrylate + NH4(+) + CO2. The catalysed reaction is (Z)-3-ureidoacrylate + H2O = (Z)-3-aminoacrylate + carbamate + H(+). It catalyses the reaction (Z)-2-methylureidoacrylate + H2O + H(+) = (Z)-2-methylaminoacrylate + NH4(+) + CO2. Functionally, hydrolyzes ureidoacrylate to form aminoacrylate and carbamate. The carbamate hydrolyzes spontaneously, thereby releasing one of the nitrogen atoms of the pyrimidine ring as ammonia and one of its carbon atoms as CO2. In Caulobacter vibrioides (strain NA1000 / CB15N) (Caulobacter crescentus), this protein is Ureidoacrylate amidohydrolase RutB.